A 61-amino-acid polypeptide reads, in one-letter code: Metallothionein-1M (61 aa).

Positions 1-29 are beta; sequence MDPNCSCTTGVSCACTGSCTCKECKCTSC. 20 residues coordinate a divalent metal cation: Cys-5, Cys-7, Cys-13, Cys-15, Cys-19, Cys-21, Cys-24, Cys-26, Cys-29, Cys-33, Cys-34, Cys-36, Cys-37, Cys-41, Cys-44, Cys-48, Cys-50, Cys-57, Cys-59, and Cys-60. The segment at 30–61 is alpha; that stretch reads KKSCCSCCPVGCAKCAHGCVCKGTLENCSCCA.

This sequence belongs to the metallothionein superfamily. Type 1 family. As to quaternary structure, monomer.

Metallothioneins have a high content of cysteine residues that bind various heavy metals; these proteins are transcriptionally regulated by both heavy metals and glucocorticoids. This is Metallothionein-1M (MT1M) from Homo sapiens (Human).